A 114-amino-acid chain; its full sequence is Immunoglobulin kappa variable 6D-21 (114 aa).

An N-terminal signal peptide occupies residues 1 to 19 (MSPSQLIGFLLLWVPASRG). Residues 20–42 (EIVLTQSPDFQSVTPKEKVTITC) are framework-1. The Ig-like domain occupies 20–114 (EIVLTQSPDF…YYCHQSSSLP (95 aa)). An intrachain disulfide couples Cys42 to Cys107. The complementarity-determining-1 stretch occupies residues 43–53 (RASQSIGSSLH). The interval 54 to 68 (WYQQKPDQSPKLLIK) is framework-2. The interval 69 to 75 (YASQSIS) is complementarity-determining-2. The segment at 76 to 107 (GVPSRFSGSGSGTDFTLTINSLEAEDAAAYYC) is framework-3. The interval 108 to 114 (HQSSSLP) is complementarity-determining-3.

As to quaternary structure, immunoglobulins are composed of two identical heavy chains and two identical light chains; disulfide-linked.

It localises to the secreted. Its subcellular location is the cell membrane. In terms of biological role, v region of the variable domain of immunoglobulin light chains that participates in the antigen recognition. Immunoglobulins, also known as antibodies, are membrane-bound or secreted glycoproteins produced by B lymphocytes. In the recognition phase of humoral immunity, the membrane-bound immunoglobulins serve as receptors which, upon binding of a specific antigen, trigger the clonal expansion and differentiation of B lymphocytes into immunoglobulins-secreting plasma cells. Secreted immunoglobulins mediate the effector phase of humoral immunity, which results in the elimination of bound antigens. The antigen binding site is formed by the variable domain of one heavy chain, together with that of its associated light chain. Thus, each immunoglobulin has two antigen binding sites with remarkable affinity for a particular antigen. The variable domains are assembled by a process called V-(D)-J rearrangement and can then be subjected to somatic hypermutations which, after exposure to antigen and selection, allow affinity maturation for a particular antigen. The chain is Immunoglobulin kappa variable 6D-21 from Homo sapiens (Human).